Reading from the N-terminus, the 357-residue chain is Peptide chain release factor 1 (357 aa).

At Gln-232 the chain carries N5-methylglutamine.

It belongs to the prokaryotic/mitochondrial release factor family. In terms of processing, methylated by PrmC. Methylation increases the termination efficiency of RF1.

The protein localises to the cytoplasm. In terms of biological role, peptide chain release factor 1 directs the termination of translation in response to the peptide chain termination codons UAG and UAA. The chain is Peptide chain release factor 1 from Oleidesulfovibrio alaskensis (strain ATCC BAA-1058 / DSM 17464 / G20) (Desulfovibrio alaskensis).